A 200-amino-acid polypeptide reads, in one-letter code: MASVAGPEIDRLIQLLARLPGLGPRSARRAALHLIKKREALMTPLASALQVAIDRIQICEICGNIDTRSPCTVCTDMRRDPSIIVVVADVADLWALERAGATNGFYHVLGATLSPLDGVGPQDLTIDALVSRAHDPRVTEIVLALNATVDGQTTAHYITDLLGEANVKVTRLAHGVPVGGELDYLDEGTLSAAMRQRTPF.

The C4-type zinc-finger motif lies at 59–74 (CEICGNIDTRSPCTVC). The 96-residue stretch at 82–177 (SIIVVVADVA…KVTRLAHGVP (96 aa)) folds into the Toprim domain.

The protein belongs to the RecR family.

Its function is as follows. May play a role in DNA repair. It seems to be involved in an RecBC-independent recombinational process of DNA repair. It may act with RecF and RecO. The protein is Recombination protein RecR of Nitrobacter hamburgensis (strain DSM 10229 / NCIMB 13809 / X14).